A 443-amino-acid polypeptide reads, in one-letter code: Putative phosphoribosyl transferase MT0597 (443 aa).

The protein in the N-terminal section; belongs to the purine/pyrimidine phosphoribosyltransferase family. In the C-terminal section; belongs to the dienelactone hydrolase family.

This chain is Putative phosphoribosyl transferase MT0597, found in Mycobacterium tuberculosis (strain CDC 1551 / Oshkosh).